The sequence spans 412 residues: Serine hydroxymethyltransferase (412 aa).

(6S)-5,6,7,8-tetrahydrofolate contacts are provided by residues Leu-117 and 121-123 (GHL). Lys-226 carries the N6-(pyridoxal phosphate)lysine modification.

This sequence belongs to the SHMT family. In terms of assembly, homodimer. It depends on pyridoxal 5'-phosphate as a cofactor.

The protein localises to the cytoplasm. The enzyme catalyses (6R)-5,10-methylene-5,6,7,8-tetrahydrofolate + glycine + H2O = (6S)-5,6,7,8-tetrahydrofolate + L-serine. It functions in the pathway one-carbon metabolism; tetrahydrofolate interconversion. It participates in amino-acid biosynthesis; glycine biosynthesis; glycine from L-serine: step 1/1. Catalyzes the reversible interconversion of serine and glycine with tetrahydrofolate (THF) serving as the one-carbon carrier. This reaction serves as the major source of one-carbon groups required for the biosynthesis of purines, thymidylate, methionine, and other important biomolecules. Also exhibits THF-independent aldolase activity toward beta-hydroxyamino acids, producing glycine and aldehydes, via a retro-aldol mechanism. The sequence is that of Serine hydroxymethyltransferase from Staphylococcus aureus (strain bovine RF122 / ET3-1).